Consider the following 456-residue polypeptide: Exodeoxyribonuclease 7 large subunit (456 aa).

It belongs to the XseA family. As to quaternary structure, heterooligomer composed of large and small subunits.

It is found in the cytoplasm. It catalyses the reaction Exonucleolytic cleavage in either 5'- to 3'- or 3'- to 5'-direction to yield nucleoside 5'-phosphates.. Its function is as follows. Bidirectionally degrades single-stranded DNA into large acid-insoluble oligonucleotides, which are then degraded further into small acid-soluble oligonucleotides. In Shigella flexneri serotype 5b (strain 8401), this protein is Exodeoxyribonuclease 7 large subunit.